The chain runs to 162 residues: Shikimate kinase (162 aa).

Residue 11–16 coordinates ATP; sequence GSGKSS. A Mg(2+)-binding site is contributed by Ser-15. Positions 33, 57, and 80 each coordinate substrate. Arg-116 serves as a coordination point for ATP. Residue Arg-132 coordinates substrate.

Belongs to the shikimate kinase family. Monomer. The cofactor is Mg(2+).

It is found in the cytoplasm. The catalysed reaction is shikimate + ATP = 3-phosphoshikimate + ADP + H(+). It functions in the pathway metabolic intermediate biosynthesis; chorismate biosynthesis; chorismate from D-erythrose 4-phosphate and phosphoenolpyruvate: step 5/7. Functionally, catalyzes the specific phosphorylation of the 3-hydroxyl group of shikimic acid using ATP as a cosubstrate. The sequence is that of Shikimate kinase from Helicobacter pylori (strain J99 / ATCC 700824) (Campylobacter pylori J99).